The following is a 66-amino-acid chain: U1-theraphotoxin-Cg1a 2 (66 aa).

The N-terminal stretch at 1-21 (MKTSALFVIFGLVLLFCNSFA) is a signal peptide. The propeptide occupies 22–29 (AELEMTGR). 3 disulfide bridges follow: Cys31/Cys46, Cys38/Cys51, and Cys45/Cys58. Pro63 carries the proline amide modification.

Belongs to the neurotoxin 10 (Hwtx-1) family. 46 (Jztx-7/10/12) subfamily. As to expression, expressed by the venom gland.

The protein localises to the secreted. In terms of biological role, probable ion channel inhibitor. In Chilobrachys guangxiensis (Chinese earth tiger tarantula), this protein is U1-theraphotoxin-Cg1a 2.